Reading from the N-terminus, the 1399-residue chain is DNA-directed RNA polymerase subunit beta' (1399 aa).

Zn(2+) contacts are provided by Cys-70, Cys-72, Cys-85, and Cys-88. Residues Asp-460, Asp-462, and Asp-464 each contribute to the Mg(2+) site. Zn(2+) is bound by residues Cys-814, Cys-888, Cys-895, and Cys-898.

This sequence belongs to the RNA polymerase beta' chain family. The RNAP catalytic core consists of 2 alpha, 1 beta, 1 beta' and 1 omega subunit. When a sigma factor is associated with the core the holoenzyme is formed, which can initiate transcription. Requires Mg(2+) as cofactor. It depends on Zn(2+) as a cofactor.

The enzyme catalyses RNA(n) + a ribonucleoside 5'-triphosphate = RNA(n+1) + diphosphate. Functionally, DNA-dependent RNA polymerase catalyzes the transcription of DNA into RNA using the four ribonucleoside triphosphates as substrates. The protein is DNA-directed RNA polymerase subunit beta' of Pseudomonas putida (strain W619).